A 386-amino-acid chain; its full sequence is Enoyl-[acyl-carrier-protein] reductase 1, mitochondrial (386 aa).

The N-terminal 22 residues, 1-22 (MYSVLKQSIRPRLLATHNQFRT), are a transit peptide targeting the mitochondrion. Residue Tyr-79 is the Proton donor of the active site. NADP(+) is bound by residues Asn-172, 199–202 (TSAV), 222–224 (RDR), 296–299 (YGGM), 321–323 (FWV), and Lys-381.

The protein belongs to the zinc-containing alcohol dehydrogenase family. Quinone oxidoreductase subfamily. As to quaternary structure, homodimer and heterodimer with ETR2.

The protein resides in the mitochondrion. It catalyses the reaction a 2,3-saturated acyl-[ACP] + NADP(+) = a (2E)-enoyl-[ACP] + NADPH + H(+). It carries out the reaction (2E,4E)-hexadienoyl-CoA + NADPH + H(+) = (4E)-hexenoyl-CoA + NADP(+). The enzyme catalyses (2E)-hexenoyl-CoA + NADPH + H(+) = hexanoyl-CoA + NADP(+). Catalyzes the NADPH-dependent reduction of trans-2-enoyl thioesters in mitochondrial fatty acid synthesis (fatty acid synthesis type II). Fatty acid chain elongation in mitochondria uses acyl carrier protein (ACP) as an acyl group carrier, but the enzyme accepts both ACP and CoA thioesters as substrates in vitro. Required for respiration and the maintenance of the mitochondrial compartment. This is Enoyl-[acyl-carrier-protein] reductase 1, mitochondrial (ETR1) from Candida tropicalis (Yeast).